The following is a 354-amino-acid chain: Alkanal monooxygenase alpha chain (354 aa).

Belongs to the bacterial luciferase oxidoreductase family. Heterodimer of an alpha and a beta chain.

The catalysed reaction is a long-chain fatty aldehyde + FMNH2 + O2 = a long-chain fatty acid + hnu + FMN + H2O + 2 H(+). Light-emitting reaction in luminous bacteria. This is Alkanal monooxygenase alpha chain (luxA) from Aliivibrio fischeri (Vibrio fischeri).